We begin with the raw amino-acid sequence, 1687 residues long: Helicase sen1 (1687 aa).

A disordered region spans residues 781–801; it reads VIKPSPTPQITVKQNTTKSSS. A compositionally biased stretch (polar residues) spans 788-801; sequence PQITVKQNTTKSSS. Residues Q1134, 1155–1159, Q1407, Y1445, and E1574 each bind ATP; that span reads GTGKT. The disordered stretch occupies residues 1661–1687; sequence MKNEEFVEPPSKKLANSEPSKEIRQRS.

This sequence belongs to the DNA2/NAM7 helicase family. As to quaternary structure, monomer.

It localises to the nucleus. In terms of biological role, ATP-dependent 5'-&gt;3' DNA/RNA helicase required for the expression and maturation of diverse classes of non-protein-coding RNAs like precursor tRNAs, rRNAs and small nuclear (snRNA) and nucleolar (snoRNA) RNAs. Directs RNA polymerase II transcription termination on snoRNAs as well as on several short protein-coding genes. May also play a role in transcription-coupled nucleotide excision repair. In Schizosaccharomyces pombe (strain 972 / ATCC 24843) (Fission yeast), this protein is Helicase sen1 (sen1).